We begin with the raw amino-acid sequence, 572 residues long: Proline--tRNA ligase (572 aa).

Belongs to the class-II aminoacyl-tRNA synthetase family. ProS type 1 subfamily. In terms of assembly, homodimer.

It localises to the cytoplasm. The enzyme catalyses tRNA(Pro) + L-proline + ATP = L-prolyl-tRNA(Pro) + AMP + diphosphate. In terms of biological role, catalyzes the attachment of proline to tRNA(Pro) in a two-step reaction: proline is first activated by ATP to form Pro-AMP and then transferred to the acceptor end of tRNA(Pro). As ProRS can inadvertently accommodate and process non-cognate amino acids such as alanine and cysteine, to avoid such errors it has two additional distinct editing activities against alanine. One activity is designated as 'pretransfer' editing and involves the tRNA(Pro)-independent hydrolysis of activated Ala-AMP. The other activity is designated 'posttransfer' editing and involves deacylation of mischarged Ala-tRNA(Pro). The misacylated Cys-tRNA(Pro) is not edited by ProRS. In Photorhabdus laumondii subsp. laumondii (strain DSM 15139 / CIP 105565 / TT01) (Photorhabdus luminescens subsp. laumondii), this protein is Proline--tRNA ligase.